The chain runs to 906 residues: Eukaryotic translation initiation factor 4 gamma 2 (906 aa).

Met1 is modified (N-acetylmethionine). A disordered region spans residues 1–71; sequence MESAIAEGGA…SAANNSANEK (71 aa). Ser11 is subject to Phosphoserine. Residues 78–308 form the MIF4G domain; the sequence is FRKVRGILNK…QDTVELREHH (231 aa). Thr89 is subject to Phosphothreonine. Arg359 carries the post-translational modification Omega-N-methylarginine. A Phosphoserine modification is found at Ser394. At Lys430 the chain carries N6-methyllysine. Ser442 bears the Phosphoserine mark. A disordered region spans residues 497–540; it reads PPSAQPPRTQTPPLGQTPQLGLKTNPPLIQEKPAKTSKKPPPSK. Polar residues predominate over residues 502–515; it reads PPRTQTPPLGQTPQ. Arg504 is modified (omega-N-methylarginine). Phosphothreonine occurs at positions 507 and 513. The MI domain occupies 542-665; the sequence is ELLKLTEAVV…SISELAQPLE (124 aa). Lys574 is covalently cross-linked (Glycyl lysine isopeptide (Lys-Gly) (interchain with G-Cter in SUMO2)). Positions 719–903 constitute a W2 domain; it reads EGKGLSFLFP…ETAEEEESEE (185 aa). Ser901 carries the phosphoserine modification.

This sequence belongs to the eukaryotic initiation factor 4G family. In terms of assembly, interacts with the serine/threonine protein kinases MKNK1 and MKNK2. Binds EIF4A and EIF3. Interacts with MIF4GD. Interacts with DAZAP2. Post-translationally, phosphorylation; hyperphosphorylated during mitosis. As to expression, ubiquitously expressed in all tissues examined.

In terms of biological role, appears to play a role in the switch from cap-dependent to IRES-mediated translation during mitosis, apoptosis and viral infection. Cleaved by some caspases and viral proteases. This is Eukaryotic translation initiation factor 4 gamma 2 from Mus musculus (Mouse).